The sequence spans 854 residues: ATP-dependent zinc metalloprotease FtsH (854 aa).

Over 1–5 the chain is Cytoplasmic; that stretch reads MNRKT. Residues 6-26 traverse the membrane as a helical segment; the sequence is VFRNVLLVAVVLLVIYAFSYF. Topologically, residues 27–112 are extracellular; sequence SNDTRDFKTV…FNTTVTQESW (86 aa). The helical transmembrane segment at 113 to 133 threads the bilayer; the sequence is LTSILLFVLPMIILFGIFFFV. Residues 134–854 lie on the Cytoplasmic side of the membrane; sequence MNRMQGGGGR…ARWDGPDGSR (721 aa). 207–214 is a binding site for ATP; that stretch reads GPPGTGKT. H429 contributes to the Zn(2+) binding site. E430 is an active-site residue. Residues H433 and D505 each contribute to the Zn(2+) site. The tract at residues 658–854 is disordered; that stretch reads AGAPNSGVPN…ARWDGPDGSR (197 aa). Composition is skewed to low complexity over residues 661–692 and 698–719; these read PNSG…AQPS and APQQ…WSAP. Pro residues predominate over residues 720-730; sequence GWPPRENPSPT. Low complexity predominate over residues 749–778; the sequence is NQSQGQYGQPQHGQPQPDQGQYGQPHPGQQ. Over residues 812 to 822 the composition is skewed to polar residues; sequence GNPSGENQWQS. Positions 825-834 are enriched in pro residues; that stretch reads PEQPQTPPPH.

In the central section; belongs to the AAA ATPase family. This sequence in the C-terminal section; belongs to the peptidase M41 family. In terms of assembly, homohexamer. Zn(2+) is required as a cofactor.

Its subcellular location is the cell membrane. Acts as a processive, ATP-dependent zinc metallopeptidase for both cytoplasmic and membrane proteins. Plays a role in the quality control of integral membrane proteins. This Rhodococcus erythropolis (strain PR4 / NBRC 100887) protein is ATP-dependent zinc metalloprotease FtsH.